The sequence spans 447 residues: Acyl-CoA (8-3)-desaturase (447 aa).

The residue at position 1 (Met-1) is an N-acetylmethionine. Topologically, residues Met-1–Arg-124 are cytoplasmic. A Cytochrome b5 heme-binding domain is found at Thr-19 to Ala-97. Residues Met-125 to Leu-145 traverse the membrane as a helical segment. Over Asp-146 to Leu-160 the chain is Lumenal. A helical membrane pass occupies residues Val-161–Leu-180. The Cytoplasmic segment spans residues Gln-181–Tyr-268. A Histidine box-1 motif is present at residues His-182–His-186. The Histidine box-2 signature appears at His-219–His-223. A helical membrane pass occupies residues Phe-269 to Phe-289. Topologically, residues Val-290 to Arg-308 are lumenal. The helical transmembrane segment at Ile-309–Val-329 threads the bilayer. Topologically, residues Arg-330–Gln-447 are cytoplasmic. The short motif at Gln-385–His-389 is the Histidine box-3 element.

It belongs to the fatty acid desaturase type 1 family. In terms of tissue distribution, highly expressed in the adrenal gland, liver, brain, and testis, tissues where lipogenesis and steroidogenesis are active. Expressed in colonic mucosa.

The protein localises to the endoplasmic reticulum membrane. The protein resides in the mitochondrion. The enzyme catalyses (8Z,11Z,14Z)-eicosatrienoyl-CoA + 2 Fe(II)-[cytochrome b5] + O2 + 2 H(+) = (5Z,8Z,11Z,14Z)-eicosatetraenoyl-CoA + 2 Fe(III)-[cytochrome b5] + 2 H2O. It catalyses the reaction (8Z,11Z,14Z,17Z)-eicosatetraenoyl-CoA + 2 Fe(II)-[cytochrome b5] + O2 + 2 H(+) = (5Z,8Z,11Z,14Z,17Z)-eicosapentaenoyl-CoA + 2 Fe(III)-[cytochrome b5] + 2 H2O. The catalysed reaction is (11E)-octadecenoyl-CoA + 2 Fe(II)-[cytochrome b5] + O2 + 2 H(+) = (5Z,11E)-octadecadienoyl-CoA + 2 Fe(III)-[cytochrome b5] + 2 H2O. It participates in lipid metabolism; polyunsaturated fatty acid biosynthesis. Its function is as follows. Acts as a front-end fatty acyl-coenzyme A (CoA) desaturase that introduces a cis double bond at carbon 5 located between a preexisting double bond and the carboxyl end of the fatty acyl chain. Involved in biosynthesis of highly unsaturated fatty acids (HUFA) from the essential polyunsaturated fatty acids (PUFA) linoleic acid (LA) (18:2n-6) and alpha-linolenic acid (ALA) (18:3n-3) precursors. Specifically, desaturates dihomo-gamma-linoleoate (DGLA) (20:3n-6) and eicosatetraenoate (ETA) (20:4n-3) to generate arachidonate (AA) (20:4n-6) and eicosapentaenoate (EPA) (20:5n-3), respectively. As a rate limiting enzyme for DGLA (20:3n-6) and AA (20:4n-6)-derived eicosanoid biosynthesis, controls the metabolism of inflammatory lipids like prostaglandin E2, critical for efficient acute inflammatory response and maintenance of epithelium homeostasis. Contributes to membrane phospholipid biosynthesis by providing AA (20:4n-6) as a major acyl chain esterified into phospholipids. In particular, regulates phosphatidylinositol-4,5-bisphosphate levels, modulating inflammatory cytokine production in T-cells. Also desaturates (11E)-octadecenoate (trans-vaccenoate)(18:1n-9), a metabolite in the biohydrogenation pathway of LA (18:2n-6). The polypeptide is Acyl-CoA (8-3)-desaturase (Mus musculus (Mouse)).